A 456-amino-acid polypeptide reads, in one-letter code: Bifunctional protein GlmU (456 aa).

Residues 1 to 229 (MLNNAMSVVI…LSEVEGVNNR (229 aa)) form a pyrophosphorylase region. UDP-N-acetyl-alpha-D-glucosamine is bound by residues 11 to 14 (LAAG), lysine 25, glutamine 76, 81 to 82 (GT), 103 to 105 (YGD), glycine 140, glutamate 154, asparagine 169, and asparagine 227. Aspartate 105 lines the Mg(2+) pocket. Asparagine 227 lines the Mg(2+) pocket. Residues 230-250 (LQLSRLERVYQSEQAEKLLLA) are linker. The segment at 251–456 (GVMLRDPARF…EGWRRPVKKK (206 aa)) is N-acetyltransferase. UDP-N-acetyl-alpha-D-glucosamine is bound by residues arginine 333 and lysine 351. The active-site Proton acceptor is the histidine 363. UDP-N-acetyl-alpha-D-glucosamine contacts are provided by tyrosine 366 and asparagine 377. Acetyl-CoA-binding positions include alanine 380, 386–387 (NY), serine 405, alanine 423, and arginine 440.

This sequence in the N-terminal section; belongs to the N-acetylglucosamine-1-phosphate uridyltransferase family. The protein in the C-terminal section; belongs to the transferase hexapeptide repeat family. In terms of assembly, homotrimer. Mg(2+) is required as a cofactor.

It is found in the cytoplasm. The catalysed reaction is alpha-D-glucosamine 1-phosphate + acetyl-CoA = N-acetyl-alpha-D-glucosamine 1-phosphate + CoA + H(+). The enzyme catalyses N-acetyl-alpha-D-glucosamine 1-phosphate + UTP + H(+) = UDP-N-acetyl-alpha-D-glucosamine + diphosphate. It functions in the pathway nucleotide-sugar biosynthesis; UDP-N-acetyl-alpha-D-glucosamine biosynthesis; N-acetyl-alpha-D-glucosamine 1-phosphate from alpha-D-glucosamine 6-phosphate (route II): step 2/2. Its pathway is nucleotide-sugar biosynthesis; UDP-N-acetyl-alpha-D-glucosamine biosynthesis; UDP-N-acetyl-alpha-D-glucosamine from N-acetyl-alpha-D-glucosamine 1-phosphate: step 1/1. The protein operates within bacterial outer membrane biogenesis; LPS lipid A biosynthesis. In terms of biological role, catalyzes the last two sequential reactions in the de novo biosynthetic pathway for UDP-N-acetylglucosamine (UDP-GlcNAc). The C-terminal domain catalyzes the transfer of acetyl group from acetyl coenzyme A to glucosamine-1-phosphate (GlcN-1-P) to produce N-acetylglucosamine-1-phosphate (GlcNAc-1-P), which is converted into UDP-GlcNAc by the transfer of uridine 5-monophosphate (from uridine 5-triphosphate), a reaction catalyzed by the N-terminal domain. The protein is Bifunctional protein GlmU of Shigella boydii serotype 18 (strain CDC 3083-94 / BS512).